The primary structure comprises 80 residues: Small ribosomal subunit protein bS16 (80 aa).

Belongs to the bacterial ribosomal protein bS16 family.

The sequence is that of Small ribosomal subunit protein bS16 from Hydrogenovibrio crunogenus (strain DSM 25203 / XCL-2) (Thiomicrospira crunogena).